The primary structure comprises 104 residues: UPF0145 protein NP_2600A (104 aa).

This sequence belongs to the UPF0145 family.

The protein is UPF0145 protein NP_2600A of Natronomonas pharaonis (strain ATCC 35678 / DSM 2160 / CIP 103997 / JCM 8858 / NBRC 14720 / NCIMB 2260 / Gabara) (Halobacterium pharaonis).